The sequence spans 202 residues: Transmembrane 4 L6 family member 4 (202 aa).

Residues 1-9 (MCTGGCARC) are Cytoplasmic-facing. Residues 10 to 30 (LGGTLIPLAVFAVLANILLFF) form a helical membrane-spanning segment. The Extracellular segment spans residues 31-48 (PGGKVVDDNSHLSDEVWY). A helical membrane pass occupies residues 49–69 (FGGILGSGVLMIFPALVFLGL). The Cytoplasmic portion of the chain corresponds to 70 to 93 (QNNDCCGCCGNESCGKRFAMFTST). A helical transmembrane segment spans residues 94 to 114 (LFAVVGFLGAAYSFIVSAVSI). Residues 115-158 (NKGPKCFMTNNTWGYPFHDGDYLNDQALWSKCEEPRDVVPWNLT) are Extracellular-facing. The N-linked (GlcNAc...) asparagine glycan is linked to Asn-156. Residues 159-179 (LFSILLVIGGIQMVLCAIQVI) traverse the membrane as a helical segment. Residues 180 to 202 (NGLLGTLCGDCQCCGCCGGDRPV) are Cytoplasmic-facing.

This sequence belongs to the L6 tetraspanin family. As to expression, expressed in liver and testis. Up-regulated in regenerating liver after partial hepatectomy.

The protein localises to the membrane. Its function is as follows. Regulates the adhesive and proliferative status of intestinal epithelial cells. Can mediate density-dependent cell proliferation. The sequence is that of Transmembrane 4 L6 family member 4 (Tm4sf4) from Rattus norvegicus (Rat).